The chain runs to 110 residues: MTSLLTFCAAALMEITGCFAFWAWLRLDKSPLWLIPGMLALALFAYLLTLADSPLAGRAYAAYGGIYIASALLWGWAIEGNRPDQWDVIGAAICLVGMSVILFGPRALPA.

4 consecutive transmembrane segments (helical) span residues 4–24 (LLTF…FWAW), 31–51 (PLWL…LTLA), 59–79 (AYAA…WAIE), and 88–108 (VIGA…PRAL).

This sequence belongs to the UPF0060 family.

It is found in the cell inner membrane. This chain is UPF0060 membrane protein Rpal_4363, found in Rhodopseudomonas palustris (strain TIE-1).